Consider the following 242-residue polypeptide: Small ribosomal subunit protein uS2 (242 aa).

It belongs to the universal ribosomal protein uS2 family.

In Shewanella halifaxensis (strain HAW-EB4), this protein is Small ribosomal subunit protein uS2.